A 96-amino-acid chain; its full sequence is UPF0235 protein YggU (96 aa).

The protein belongs to the UPF0235 family.

The sequence is that of UPF0235 protein YggU from Escherichia coli O157:H7.